Here is a 291-residue protein sequence, read N- to C-terminus: Pyridoxal 5'-phosphate synthase subunit PdxS (291 aa).

Asp-23 serves as a coordination point for D-ribose 5-phosphate. Residue Lys-80 is the Schiff-base intermediate with D-ribose 5-phosphate of the active site. D-ribose 5-phosphate is bound at residue Gly-152. A D-glyceraldehyde 3-phosphate-binding site is contributed by Arg-164. D-ribose 5-phosphate is bound by residues Gly-213 and 234 to 235; that span reads GS.

It belongs to the PdxS/SNZ family. As to quaternary structure, in the presence of PdxT, forms a dodecamer of heterodimers.

The catalysed reaction is aldehydo-D-ribose 5-phosphate + D-glyceraldehyde 3-phosphate + L-glutamine = pyridoxal 5'-phosphate + L-glutamate + phosphate + 3 H2O + H(+). Its pathway is cofactor biosynthesis; pyridoxal 5'-phosphate biosynthesis. Its function is as follows. Catalyzes the formation of pyridoxal 5'-phosphate from ribose 5-phosphate (RBP), glyceraldehyde 3-phosphate (G3P) and ammonia. The ammonia is provided by the PdxT subunit. Can also use ribulose 5-phosphate and dihydroxyacetone phosphate as substrates, resulting from enzyme-catalyzed isomerization of RBP and G3P, respectively. This Methanocorpusculum labreanum (strain ATCC 43576 / DSM 4855 / Z) protein is Pyridoxal 5'-phosphate synthase subunit PdxS.